The sequence spans 114 residues: Large ribosomal subunit protein uL22 (114 aa).

The protein belongs to the universal ribosomal protein uL22 family. In terms of assembly, part of the 50S ribosomal subunit.

In terms of biological role, this protein binds specifically to 23S rRNA; its binding is stimulated by other ribosomal proteins, e.g. L4, L17, and L20. It is important during the early stages of 50S assembly. It makes multiple contacts with different domains of the 23S rRNA in the assembled 50S subunit and ribosome. Its function is as follows. The globular domain of the protein is located near the polypeptide exit tunnel on the outside of the subunit, while an extended beta-hairpin is found that lines the wall of the exit tunnel in the center of the 70S ribosome. The chain is Large ribosomal subunit protein uL22 from Bacillus licheniformis (strain ATCC 14580 / DSM 13 / JCM 2505 / CCUG 7422 / NBRC 12200 / NCIMB 9375 / NCTC 10341 / NRRL NRS-1264 / Gibson 46).